The chain runs to 281 residues: Large ribosomal subunit protein uL2 (281 aa).

Residues 27 to 38 (DSPEKSLTEPLK) show a composition bias toward basic and acidic residues. 2 disordered regions span residues 27–59 (DSPE…GGHK) and 225–281 (AMNP…ARSQ). A compositionally biased stretch (basic residues) spans 45–59 (VHGHITRRHQGGGHK).

The protein belongs to the universal ribosomal protein uL2 family. As to quaternary structure, part of the 50S ribosomal subunit. Forms a bridge to the 30S subunit in the 70S ribosome.

One of the primary rRNA binding proteins. Required for association of the 30S and 50S subunits to form the 70S ribosome, for tRNA binding and peptide bond formation. It has been suggested to have peptidyltransferase activity; this is somewhat controversial. Makes several contacts with the 16S rRNA in the 70S ribosome. The protein is Large ribosomal subunit protein uL2 of Myxococcus xanthus (strain DK1622).